Here is a 609-residue protein sequence, read N- to C-terminus: Sodium- and chloride-dependent GABA transporter 2 (609 aa).

A compositionally biased stretch (polar residues) spans 1 to 13 (MDSRASGTASNGE). The tract at residues 1 to 23 (MDSRASGTASNGETKPVYPVMEK) is disordered. At 1–40 (MDSRASGTASNGETKPVYPVMEKEEEEGTLERGHWNNKME) the chain is on the cytoplasmic side. Helical transmembrane passes span 41-61 (FVLS…FPYL), 68-88 (GAFF…VFLL), and 121-141 (IVIL…FYLF). The Extracellular segment spans residues 142–206 (SSFTIDLPWG…GIQHLGALRW (65 aa)). Cys-153 and Cys-162 are joined by a disulfide. 2 N-linked (GlcNAc...) asparagine glycosylation sites follow: Asn-169 and Asn-173. Transmembrane regions (helical) follow at residues 207–227 (ELAL…WKGV) and 233–253 (VVYF…IRGV). A glycan (N-linked (GlcNAc...) asparagine) is linked at Asn-269. Transmembrane regions (helical) follow at residues 282–302 (AGTQ…ALGS), 319–339 (FLNS…LGFM), 366–386 (VVML…VVLL), 418–438 (VLIL…LTEG), 453–473 (GMCL…VYGA), 490–510 (PLIK…TFLF), and 528–548 (WWGD…IPAW). The Cytoplasmic portion of the chain corresponds to 549–609 (SLYRLGTLKG…LRLTELESHC (61 aa)). Thr-594 is subject to Phosphothreonine. The residue at position 598 (Ser-598) is a Phosphoserine.

The protein belongs to the sodium:neurotransmitter symporter (SNF) (TC 2.A.22) family. SLC6A13 subfamily.

Its subcellular location is the cell membrane. It localises to the basolateral cell membrane. The catalysed reaction is 4-aminobutanoate(out) + chloride(out) + 2 Na(+)(out) = 4-aminobutanoate(in) + chloride(in) + 2 Na(+)(in). The enzyme catalyses taurine(out) + chloride(out) + 2 Na(+)(out) = taurine(in) + chloride(in) + 2 Na(+)(in). It carries out the reaction beta-alanine(out) + chloride(out) + 2 Na(+)(out) = beta-alanine(in) + chloride(in) + 2 Na(+)(in). It catalyses the reaction hypotaurine(out) + chloride(out) + 2 Na(+)(out) = hypotaurine(in) + chloride(in) + 2 Na(+)(in). Functionally, mediates sodium- and chloride-dependent transport of gamma-aminobutyric acid (GABA). Can also mediate transport of beta-alanine, taurine and hypotaurine. In Macaca fascicularis (Crab-eating macaque), this protein is Sodium- and chloride-dependent GABA transporter 2 (SLC6A13).